The sequence spans 313 residues: R2-like ligand binding oxidase (313 aa).

Mn(2+)-binding residues include Glu-68, Glu-101, and His-104. Positions 71 to 162 form a cross-link, 3-(O4'-tyrosyl)-valine (Val-Tyr); that stretch reads VTQDIQPFMS…AAQVRASVTY (92 aa). Glu-101 provides a ligand contact to Fe cation. Glu-167, Glu-202, and His-205 together coordinate Fe cation.

It belongs to the ribonucleoside diphosphate reductase small chain family. R2-like ligand binding oxidase subfamily. Homodimer. Fe cation is required as a cofactor. Mn(2+) serves as cofactor.

In terms of biological role, probable oxidase that might be involved in lipid metabolism. This Mycobacteroides abscessus (strain ATCC 19977 / DSM 44196 / CCUG 20993 / CIP 104536 / JCM 13569 / NCTC 13031 / TMC 1543 / L948) (Mycobacterium abscessus) protein is R2-like ligand binding oxidase.